Here is a 181-residue protein sequence, read N- to C-terminus: Protein CRABS CLAW (181 aa).

The segment at 26 to 53 (CSICNTILAVGIPLKRMLDTVTVKCGHC) adopts a C4-type zinc-finger fold. Residues 80 to 122 (GSDYKKGSSSSSSSSTSSDQPPSPSPPFVVKPPEKKQRLPSAY) form a disordered region. Residues 87-99 (SSSSSSSSTSSDQ) show a composition bias toward low complexity. Positions 100–109 (PPSPSPPFVV) are enriched in pro residues.

Belongs to the YABBY family. In terms of tissue distribution, restricted to flowers, mostly in carpels and nectaries. Expressed at low levels in sepal primordia (buds), sepal receptacle and developing petal. Not detected in placental tissues, septum, stigma and ovules.

It localises to the nucleus. Functionally, transcription factor required for the initiation of nectary development. Also involved in suppressing early radial growth of the gynoecium, in promoting its later elongation and in fusion of its carpels by regulating both cell division and expansion. Establishes the polar differentiation in the carpels by specifying abaxial cell fate in the ovary wall. Regulates both cell division and expansion. This chain is Protein CRABS CLAW, found in Arabidopsis thaliana (Mouse-ear cress).